The sequence spans 376 residues: Succinate--CoA ligase [ADP-forming] subunit beta (376 aa).

The region spanning 9 to 237 (KEIFSKYGIP…PTEEEKVEAD (229 aa)) is the ATP-grasp domain. ATP is bound by residues lysine 46, 53–55 (GRG), valine 95, and glutamate 100. Mg(2+) contacts are provided by asparagine 192 and aspartate 206. Substrate is bound by residues asparagine 257 and 314–316 (GIT).

The protein belongs to the succinate/malate CoA ligase beta subunit family. In terms of assembly, heterotetramer of two alpha and two beta subunits. The cofactor is Mg(2+).

It carries out the reaction succinate + ATP + CoA = succinyl-CoA + ADP + phosphate. It catalyses the reaction GTP + succinate + CoA = succinyl-CoA + GDP + phosphate. The protein operates within carbohydrate metabolism; tricarboxylic acid cycle; succinate from succinyl-CoA (ligase route): step 1/1. In terms of biological role, succinyl-CoA synthetase functions in the citric acid cycle (TCA), coupling the hydrolysis of succinyl-CoA to the synthesis of either ATP or GTP and thus represents the only step of substrate-level phosphorylation in the TCA. The beta subunit provides nucleotide specificity of the enzyme and binds the substrate succinate, while the binding sites for coenzyme A and phosphate are found in the alpha subunit. This is Succinate--CoA ligase [ADP-forming] subunit beta from Bacteroides thetaiotaomicron (strain ATCC 29148 / DSM 2079 / JCM 5827 / CCUG 10774 / NCTC 10582 / VPI-5482 / E50).